Consider the following 341-residue polypeptide: Fructose-1,6-bisphosphatase, cytosolic (341 aa).

Positions 71, 100, 121, 123, and 124 each coordinate Mg(2+). Substrate contacts are provided by residues 124 to 127, N215, Y247, Y267, and K277; that span reads DGSS. Residue E283 participates in Mg(2+) binding.

The protein belongs to the FBPase class 1 family. It depends on Mg(2+) as a cofactor.

It localises to the cytoplasm. The enzyme catalyses beta-D-fructose 1,6-bisphosphate + H2O = beta-D-fructose 6-phosphate + phosphate. The sequence is that of Fructose-1,6-bisphosphatase, cytosolic from Spinacia oleracea (Spinach).